The primary structure comprises 124 residues: MTTINQLVRKPRQATTYKSASPALDKCPQRRGVCTRVYTTTPKKPNSALRKVAKVRLTNQEEVISYIGGEGHNLQEHSVVLIRGGRVKDLPGVRYHTVRGSLDAAGVAKRRQGRSKYGAKRPKS.

Positions 1–24 (MTTINQLVRKPRQATTYKSASPAL) are disordered. Residue aspartate 89 is modified to 3-methylthioaspartic acid.

Belongs to the universal ribosomal protein uS12 family. Part of the 30S ribosomal subunit. Contacts proteins S8 and S17. May interact with IF1 in the 30S initiation complex.

Its function is as follows. With S4 and S5 plays an important role in translational accuracy. Interacts with and stabilizes bases of the 16S rRNA that are involved in tRNA selection in the A site and with the mRNA backbone. Located at the interface of the 30S and 50S subunits, it traverses the body of the 30S subunit contacting proteins on the other side and probably holding the rRNA structure together. The combined cluster of proteins S8, S12 and S17 appears to hold together the shoulder and platform of the 30S subunit. The polypeptide is Small ribosomal subunit protein uS12 (Xanthomonas axonopodis pv. citri (strain 306)).